Reading from the N-terminus, the 271-residue chain is Tryptophan synthase alpha chain (271 aa).

Residues Glu49 and Asp60 each act as proton acceptor in the active site.

This sequence belongs to the TrpA family. As to quaternary structure, tetramer of two alpha and two beta chains.

The enzyme catalyses (1S,2R)-1-C-(indol-3-yl)glycerol 3-phosphate + L-serine = D-glyceraldehyde 3-phosphate + L-tryptophan + H2O. The protein operates within amino-acid biosynthesis; L-tryptophan biosynthesis; L-tryptophan from chorismate: step 5/5. In terms of biological role, the alpha subunit is responsible for the aldol cleavage of indoleglycerol phosphate to indole and glyceraldehyde 3-phosphate. The protein is Tryptophan synthase alpha chain of Paraburkholderia phymatum (strain DSM 17167 / CIP 108236 / LMG 21445 / STM815) (Burkholderia phymatum).